The primary structure comprises 138 residues: Large ribosomal subunit protein uL16 (138 aa).

A compositionally biased stretch (basic residues) spans 1–15 (MLSPKKVKYRKKQRG). Residues 1–20 (MLSPKKVKYRKKQRGRLSGE) are disordered.

It belongs to the universal ribosomal protein uL16 family. Part of the 50S ribosomal subunit.

Binds 23S rRNA and is also seen to make contacts with the A and possibly P site tRNAs. This is Large ribosomal subunit protein uL16 from Borrelia hermsii (strain HS1 / DAH).